Here is a 325-residue protein sequence, read N- to C-terminus: Beta-ketoacyl-[acyl-carrier-protein] synthase III (325 aa).

Residues Cys114 and His252 contribute to the active site. The tract at residues 253-257 is ACP-binding; the sequence is QANFR. Residue Asn282 is part of the active site.

This sequence belongs to the thiolase-like superfamily. FabH family. As to quaternary structure, homodimer.

The protein localises to the cytoplasm. It carries out the reaction malonyl-[ACP] + acetyl-CoA + H(+) = 3-oxobutanoyl-[ACP] + CO2 + CoA. It participates in lipid metabolism; fatty acid biosynthesis. Catalyzes the condensation reaction of fatty acid synthesis by the addition to an acyl acceptor of two carbons from malonyl-ACP. Catalyzes the first condensation reaction which initiates fatty acid synthesis and may therefore play a role in governing the total rate of fatty acid production. Possesses both acetoacetyl-ACP synthase and acetyl transacylase activities. Its substrate specificity determines the biosynthesis of branched-chain and/or straight-chain of fatty acids. In Novosphingobium aromaticivorans (strain ATCC 700278 / DSM 12444 / CCUG 56034 / CIP 105152 / NBRC 16084 / F199), this protein is Beta-ketoacyl-[acyl-carrier-protein] synthase III.